Reading from the N-terminus, the 115-residue chain is Large ribosomal subunit protein bL19 (115 aa).

This sequence belongs to the bacterial ribosomal protein bL19 family.

Its function is as follows. This protein is located at the 30S-50S ribosomal subunit interface and may play a role in the structure and function of the aminoacyl-tRNA binding site. The chain is Large ribosomal subunit protein bL19 from Streptococcus equi subsp. equi (strain 4047).